Consider the following 611-residue polypeptide: DNA mismatch repair protein MutL (611 aa).

It belongs to the DNA mismatch repair MutL/HexB family.

In terms of biological role, this protein is involved in the repair of mismatches in DNA. It is required for dam-dependent methyl-directed DNA mismatch repair. May act as a 'molecular matchmaker', a protein that promotes the formation of a stable complex between two or more DNA-binding proteins in an ATP-dependent manner without itself being part of a final effector complex. This is DNA mismatch repair protein MutL from Borrelia garinii subsp. bavariensis (strain ATCC BAA-2496 / DSM 23469 / PBi) (Borreliella bavariensis).